The chain runs to 366 residues: Proline-rich protein 19 (366 aa).

4 disordered regions span residues 1-53 (MDPR…RDPC), 102-149 (ESHT…DLPV), 256-286 (TPAHRGSQVQPPGHQLPFLSSASSPSGAAWG), and 301-338 (ATPPPPPPQPWDVRPPQPLPQPPSPLLPRTSALDWSPN). Residues 18 to 29 (GRIRRRKTRRER) are compositionally biased toward basic residues. Composition is skewed to polar residues over residues 104–113 (HTPQLPTKPS) and 256–265 (TPAHRGSQVQ). Residues 275–286 (SSASSPSGAAWG) are compositionally biased toward low complexity. Pro residues predominate over residues 302–326 (TPPPPPPQPWDVRPPQPLPQPPSPL).

In terms of assembly, interacts with CNTD1. In terms of tissue distribution, preferentially expressed in gonads.

The protein localises to the nucleus. The protein resides in the chromosome. Promotes meiotic crossing over formation through its interaction with CNTD1 by participating in the crossover differentiation step of crossover-specific recombination intermediates. The polypeptide is Proline-rich protein 19 (Mus musculus (Mouse)).